A 111-amino-acid polypeptide reads, in one-letter code: MMMEVKAIHKGARISAQKTRLVADQIRGLPIARALNILNFSPKKAAFIVKKVVESAVANAEHNKGADIDELKVSAIIVDKGTSLKRFTARAKGRGNQIEKQTCHISVTLSN.

Belongs to the universal ribosomal protein uL22 family. As to quaternary structure, part of the 50S ribosomal subunit.

This protein binds specifically to 23S rRNA; its binding is stimulated by other ribosomal proteins, e.g. L4, L17, and L20. It is important during the early stages of 50S assembly. It makes multiple contacts with different domains of the 23S rRNA in the assembled 50S subunit and ribosome. In terms of biological role, the globular domain of the protein is located near the polypeptide exit tunnel on the outside of the subunit, while an extended beta-hairpin is found that lines the wall of the exit tunnel in the center of the 70S ribosome. The polypeptide is Large ribosomal subunit protein uL22 (Polynucleobacter necessarius subsp. necessarius (strain STIR1)).